A 340-amino-acid polypeptide reads, in one-letter code: MSMIVIDGSYGEGGGQILRTSVALSVITGKPVRIYNIRANRPNPGLRPQHMHGILALKELSGAKVKGAQVGSTVLEFYPGRARPRHIRVPIKTAGSVTLVLQALLPAMAFIGGSFEITGGTDVPWSPPVDYLRHVTLFALEKMGLRAEIEIKRRGHYPKGGGLVVGRVEPWEERKPLVALEWRHIELFGGISHATNLPEHVASRQAKAARERLSEFYDVPINIYEEVSRSLGPGSGIVVWAETDVLRLGGDALGKRGKPAEAVGREAADELLEQLTSRAAVDRFLGDQLVPFLAFAGGEIKVAEITNHLVTNVWVVEQFLGKIFEVEGEVGEPGRVRVVG.

ATP is bound by residues Gln102 and 284–288 (FLGDQ). Catalysis depends on His308, which acts as the Tele-AMP-histidine intermediate.

It belongs to the RNA 3'-terminal cyclase family. Type 1 subfamily.

It localises to the cytoplasm. It catalyses the reaction a 3'-end 3'-phospho-ribonucleotide-RNA + ATP = a 3'-end 2',3'-cyclophospho-ribonucleotide-RNA + AMP + diphosphate. In terms of biological role, catalyzes the conversion of 3'-phosphate to a 2',3'-cyclic phosphodiester at the end of RNA. The mechanism of action of the enzyme occurs in 3 steps: (A) adenylation of the enzyme by ATP; (B) transfer of adenylate to an RNA-N3'P to produce RNA-N3'PP5'A; (C) and attack of the adjacent 2'-hydroxyl on the 3'-phosphorus in the diester linkage to produce the cyclic end product. The biological role of this enzyme is unknown but it is likely to function in some aspects of cellular RNA processing. This Thermococcus onnurineus (strain NA1) protein is RNA 3'-terminal phosphate cyclase.